The sequence spans 262 residues: MAVVTMKQLLESGVHFGHQTRRWNPKMKDYIFTERNGIYIIDLQKTVALLDKAYDYVRDMASKGKTILFVGTKKQAQETIKTEAERCGMPYVNQRWLGGMLTNFRTIKKRVKRLNELEKMEEDGLFEVLPKKEVILLKKERDKLERFLGGIRDMKNLPDVVYITDPRKESIAVAEARKLNIPIVSIVDTNCDPDLIDYIIPGNDDAIRAVKLISSKIADAVLAGKQGEQLTEEAKPEDKEDEKGQAEEKEVKEENNSANKEE.

Positions Lys-225 to Glu-262 are disordered. Over residues Glu-232–Glu-262 the composition is skewed to basic and acidic residues.

It belongs to the universal ribosomal protein uS2 family.

The sequence is that of Small ribosomal subunit protein uS2 from Halothermothrix orenii (strain H 168 / OCM 544 / DSM 9562).